The sequence spans 159 residues: Ribosomal RNA large subunit methyltransferase H (159 aa).

Residues leucine 76, glycine 108, and 127-132 (FGRLTL) contribute to the S-adenosyl-L-methionine site.

It belongs to the RNA methyltransferase RlmH family. As to quaternary structure, homodimer.

It localises to the cytoplasm. The catalysed reaction is pseudouridine(1915) in 23S rRNA + S-adenosyl-L-methionine = N(3)-methylpseudouridine(1915) in 23S rRNA + S-adenosyl-L-homocysteine + H(+). Specifically methylates the pseudouridine at position 1915 (m3Psi1915) in 23S rRNA. This Streptococcus pneumoniae (strain 70585) protein is Ribosomal RNA large subunit methyltransferase H.